We begin with the raw amino-acid sequence, 356 residues long: Peptide chain release factor 1 (356 aa).

At glutamine 234 the chain carries N5-methylglutamine.

It belongs to the prokaryotic/mitochondrial release factor family. Methylated by PrmC. Methylation increases the termination efficiency of RF1.

Its subcellular location is the cytoplasm. Functionally, peptide chain release factor 1 directs the termination of translation in response to the peptide chain termination codons UAG and UAA. This chain is Peptide chain release factor 1, found in Parafrankia sp. (strain EAN1pec).